A 339-amino-acid polypeptide reads, in one-letter code: Tetraacyldisaccharide 4'-kinase (339 aa).

An ATP-binding site is contributed by 58 to 65 (TVGGSGKT).

This sequence belongs to the LpxK family.

The enzyme catalyses a lipid A disaccharide + ATP = a lipid IVA + ADP + H(+). Its pathway is glycolipid biosynthesis; lipid IV(A) biosynthesis; lipid IV(A) from (3R)-3-hydroxytetradecanoyl-[acyl-carrier-protein] and UDP-N-acetyl-alpha-D-glucosamine: step 6/6. In terms of biological role, transfers the gamma-phosphate of ATP to the 4'-position of a tetraacyldisaccharide 1-phosphate intermediate (termed DS-1-P) to form tetraacyldisaccharide 1,4'-bis-phosphate (lipid IVA). This Shewanella baltica (strain OS155 / ATCC BAA-1091) protein is Tetraacyldisaccharide 4'-kinase.